The primary structure comprises 612 residues: Siderophore iron transporter 1 (612 aa).

Serine 5, serine 21, serine 22, serine 36, and serine 41 each carry phosphoserine. A run of 14 helical transmembrane segments spans residues 91–111 (ISFY…SFQA), 125–145 (FAGH…SAAI), 159–179 (LEAF…MAAS), 188–208 (GSVL…IFMA), 218–238 (LVLG…PRVA), 249–269 (WGIA…LAVY), 299–319 (IIGL…ISLA), 331–351 (FIVM…YEIF), 365–385 (EPTI…FYCW), 406–426 (YISY…GILI), 434–453 (WYFV…MIRY), 464–484 (IMPQ…LTVA), 495–515 (AIVT…GSAI), and 573–593 (ILTS…WFVA).

It belongs to the major facilitator superfamily.

The protein localises to the membrane. Its function is as follows. Involved in the transport of siderophore iron and so has a role in iron homeostasis. In Schizosaccharomyces pombe (strain 972 / ATCC 24843) (Fission yeast), this protein is Siderophore iron transporter 1 (str1).